The primary structure comprises 195 residues: Protein GrpE (195 aa).

Belongs to the GrpE family. As to quaternary structure, homodimer.

It localises to the cytoplasm. Functionally, participates actively in the response to hyperosmotic and heat shock by preventing the aggregation of stress-denatured proteins, in association with DnaK and GrpE. It is the nucleotide exchange factor for DnaK and may function as a thermosensor. Unfolded proteins bind initially to DnaJ; upon interaction with the DnaJ-bound protein, DnaK hydrolyzes its bound ATP, resulting in the formation of a stable complex. GrpE releases ADP from DnaK; ATP binding to DnaK triggers the release of the substrate protein, thus completing the reaction cycle. Several rounds of ATP-dependent interactions between DnaJ, DnaK and GrpE are required for fully efficient folding. The polypeptide is Protein GrpE (Blochmanniella pennsylvanica (strain BPEN)).